We begin with the raw amino-acid sequence, 493 residues long: Galactose-1-phosphate uridylyltransferase (493 aa).

It belongs to the galactose-1-phosphate uridylyltransferase type 2 family.

Its subcellular location is the cytoplasm. It carries out the reaction alpha-D-galactose 1-phosphate + UDP-alpha-D-glucose = alpha-D-glucose 1-phosphate + UDP-alpha-D-galactose. It functions in the pathway carbohydrate metabolism; galactose metabolism. This chain is Galactose-1-phosphate uridylyltransferase, found in Streptococcus pneumoniae (strain Hungary19A-6).